The following is a 177-amino-acid chain: Large ribosomal subunit protein uL6 (177 aa).

Belongs to the universal ribosomal protein uL6 family. As to quaternary structure, part of the 50S ribosomal subunit.

Functionally, this protein binds to the 23S rRNA, and is important in its secondary structure. It is located near the subunit interface in the base of the L7/L12 stalk, and near the tRNA binding site of the peptidyltransferase center. The chain is Large ribosomal subunit protein uL6 from Tolumonas auensis (strain DSM 9187 / NBRC 110442 / TA 4).